Reading from the N-terminus, the 71-residue chain is Conotoxin Lt11.3 (71 aa).

The N-terminal stretch at 1 to 26 is a signal peptide; sequence MMFRLTSVGCILLVIAFLNLVGLTNA. Disulfide bonds link C27–C41, C34–C46, C40–C50, and C45–C54. At P57 the chain carries Proline amide. The propeptide occupies 61-71; the sequence is TRLQGFFKHRR.

The protein belongs to the conotoxin I2 superfamily. Expressed by the venom duct.

It localises to the secreted. Functionally, probable neurotoxin. This is Conotoxin Lt11.3 from Conus litteratus (Lettered cone).